A 159-amino-acid chain; its full sequence is Transcriptional repressor NrdR (159 aa).

Polar residues predominate over residues methionine 1–serine 11. Residues methionine 1 to aspartate 20 form a disordered region. A zinc finger lies at cysteine 3–cysteine 34. Residues isoleucine 49–aspartate 139 enclose the ATP-cone domain.

The protein belongs to the NrdR family. Zn(2+) is required as a cofactor.

In terms of biological role, negatively regulates transcription of bacterial ribonucleotide reductase nrd genes and operons by binding to NrdR-boxes. This is Transcriptional repressor NrdR from Prochlorococcus marinus (strain NATL1A).